A 171-amino-acid polypeptide reads, in one-letter code: Ribosome maturation factor RimM (171 aa).

Residues A96–L170 form the PRC barrel domain.

This sequence belongs to the RimM family. In terms of assembly, binds ribosomal protein uS19.

It localises to the cytoplasm. Its function is as follows. An accessory protein needed during the final step in the assembly of 30S ribosomal subunit, possibly for assembly of the head region. Essential for efficient processing of 16S rRNA. May be needed both before and after RbfA during the maturation of 16S rRNA. It has affinity for free ribosomal 30S subunits but not for 70S ribosomes. The polypeptide is Ribosome maturation factor RimM (Bacillus anthracis (strain A0248)).